Reading from the N-terminus, the 338-residue chain is GTPase Obg (338 aa).

In terms of domain architecture, Obg spans 1–159 (MQFIDEVKIH…RWLRLELKLM (159 aa)). The disordered stretch occupies residues 66–91 (KAGRGKNGMGKDRHGANGDDLTIPVP). The region spanning 160 to 331 (ADVGLLGFPN…LLDEIARHLW (172 aa)) is the OBG-type G domain. GTP is bound by residues 166-173 (GFPNVGKS), 191-195 (FTTIK), 213-216 (DIPG), 283-286 (NKID), and 312-314 (SAA). Ser173 and Thr193 together coordinate Mg(2+).

This sequence belongs to the TRAFAC class OBG-HflX-like GTPase superfamily. OBG GTPase family. Monomer. The cofactor is Mg(2+).

It is found in the cytoplasm. Its function is as follows. An essential GTPase which binds GTP, GDP and possibly (p)ppGpp with moderate affinity, with high nucleotide exchange rates and a fairly low GTP hydrolysis rate. Plays a role in control of the cell cycle, stress response, ribosome biogenesis and in those bacteria that undergo differentiation, in morphogenesis control. This is GTPase Obg from Geobacter metallireducens (strain ATCC 53774 / DSM 7210 / GS-15).